The sequence spans 94 residues: Large ribosomal subunit protein bL25 (94 aa).

The protein belongs to the bacterial ribosomal protein bL25 family. In terms of assembly, part of the 50S ribosomal subunit; part of the 5S rRNA/L5/L18/L25 subcomplex. Contacts the 5S rRNA. Binds to the 5S rRNA independently of L5 and L18.

This is one of the proteins that binds to the 5S RNA in the ribosome where it forms part of the central protuberance. This Salmonella arizonae (strain ATCC BAA-731 / CDC346-86 / RSK2980) protein is Large ribosomal subunit protein bL25.